We begin with the raw amino-acid sequence, 250 residues long: ATP synthase subunit a (250 aa).

5 consecutive transmembrane segments (helical) span residues 27-47 (TDTV…AFYL), 83-103 (IAPF…ISNW), 129-149 (INYV…AGIW), 191-211 (IFAG…IMWA), and 219-239 (FDLF…ILYF).

Belongs to the ATPase A chain family. In terms of assembly, F-type ATPases have 2 components, CF(1) - the catalytic core - and CF(0) - the membrane proton channel. CF(1) has five subunits: alpha(3), beta(3), gamma(1), delta(1), epsilon(1). CF(0) has three main subunits: a(1), b(2) and c(9-12). The alpha and beta chains form an alternating ring which encloses part of the gamma chain. CF(1) is attached to CF(0) by a central stalk formed by the gamma and epsilon chains, while a peripheral stalk is formed by the delta and b chains.

Its subcellular location is the cell membrane. Key component of the proton channel; it plays a direct role in the translocation of protons across the membrane. The chain is ATP synthase subunit a from Mycobacterium marinum (strain ATCC BAA-535 / M).